Consider the following 51-residue polypeptide: Insulin (51 aa).

3 disulfide bridges follow: C7/C36, C19/C49, and C35/C40.

This sequence belongs to the insulin family. Heterodimer of a B chain and an A chain linked by two disulfide bonds.

The protein resides in the secreted. Insulin decreases blood glucose concentration. It increases cell permeability to monosaccharides, amino acids and fatty acids. It accelerates glycolysis, the pentose phosphate cycle, and glycogen synthesis in liver. This chain is Insulin (INS), found in Myocastor coypus (Coypu).